A 580-amino-acid polypeptide reads, in one-letter code: Anaphase-promoting complex subunit 7 (580 aa).

10 TPR repeats span residues 50-83 (IISF…LFKV), 107-140 (YELK…SRGL), 141-175 (DTHL…CPLC), 253-286 (VLEK…DPYY), 321-354 (AETW…KESH), 356-388 (FAHS…SKNI), 390-421 (TARE…SPDY), 422-456 (SKTM…SPHC), 458-490 (DTVL…QETD), and 491-523 (LMHT…NPQY). The tract at residues 539-580 (GIDPDQELDQENDDDDQEEGEGENDQEENDDDDNDDDDEYIS) is disordered. Positions 542-580 (PDQELDQENDDDDQEEGEGENDQEENDDDDNDDDDEYIS) are enriched in acidic residues.

The protein belongs to the APC7 family. In terms of assembly, the APC/C is composed of at least 13 subunits that stay tightly associated throughout the cell cycle: anapc1, anapc2, anapc3, anapc4, anapc5, anapc6, anapc7, anapc8, anapc10, anapc11, cdc20, cdc26 and cdh1.

The protein localises to the nucleus. It functions in the pathway protein modification; protein ubiquitination. Its function is as follows. Component of the anaphase promoting complex/cyclosome (APC/C), a cell cycle-regulated E3 ubiquitin-protein ligase complex that controls progression through mitosis and the G1 phase of the cell cycle. This Dictyostelium discoideum (Social amoeba) protein is Anaphase-promoting complex subunit 7 (anapc7).